A 175-amino-acid polypeptide reads, in one-letter code: ADP-ribosylation factor 6 (175 aa).

Residue G2 is the site of N-myristoyl glycine attachment. A lipid anchor (N6-myristoyl lysine) is attached at K3. GTP-binding positions include 23 to 28, 41 to 44, 63 to 67, 122 to 125, and 155 to 156; these read AAGKTT, TIPT, DVGGQ, NKQD, and CA.

It belongs to the small GTPase superfamily. Arf family. As to quaternary structure, interacts (when activated) with GGA1, GGA2 and GGA3; the interaction is required for proper subcellular location of GGA1, GGA2 and GGA3. Interacts with PIP5K1C. Interacts with USP6 (via Rab-GAP TBC domain). Interacts with RAB11FIP3 and RAB11FIP4. Interacts with HERC1. Interacts with ARHGAP21. Interacts with ASAP3; the interaction is stabilized by calcium ions. Interacts with NCS1/FREQ at the plasma membrane. Interacts with TBC1D24. Interacts with ECPAS. Interacts with MICALL1. Interacts with SPAG9 homodimers, forming heterotetramers. Interacts with CYTH3. Interacts with ASAP2. Interacts with UACA. Interacts with KIF23, forming heterodimers and heterotetramers. Interacts with C9orf72. Interacts (GTP-bound form) with TJAP1/PILT. Interacts with PRKAA2. Interacts with CD36 (when palmitoylated); this interaction mediates CD36 transport from the Golgi to the plasma membrane. Interacts with APBB1. In terms of assembly, (Microbial infection) Interacts with the V.cholerae enterotoxin subunit A1; this causes a conformation change so that the toxin can bind NAD and catalyze the ADP-ribosylation of Gs alpha. (Microbial infection) Interacts with EspG from enteropathogenic E.coli. As to quaternary structure, (Microbial infection) Identified in a complex with RAB1A and EspG from enteropathogenic E.coli. In terms of assembly, (Microbial infection) Interacts with human enterovirus 71 protein VP1. In terms of processing, GTP-bound form is myristoylated on Lys-3 by NMT1 and NMT2, allowing ARF6 to remain on membranes during the GTPase cycle, thereby promoting its activity. GDP-bound inactive form is demyristoylated on Lys-3 by SIRT2 at early endosomes or endocytic recycling compartment to allow its efficient activation by a guanine exchange factor (GEF) after GDP release. In terms of tissue distribution, ubiquitous, with higher levels in heart, substantia nigra, and kidney.

It localises to the cytoplasm. Its subcellular location is the cytosol. The protein localises to the cell membrane. It is found in the endosome membrane. The protein resides in the recycling endosome membrane. It localises to the cell projection. Its subcellular location is the filopodium membrane. The protein localises to the ruffle. It is found in the cleavage furrow. The protein resides in the midbody. It localises to the midbody ring. Its subcellular location is the early endosome membrane. The protein localises to the golgi apparatus. It is found in the trans-Golgi network membrane. It catalyses the reaction GTP + H2O = GDP + phosphate + H(+). With respect to regulation, activation is generally mediated by a guanine exchange factor (GEF), while inactivation through hydrolysis of bound GTP is catalyzed by a GTPase activating protein (GAP). Activated by ASAP3. Inactivated by ACAP1 and ACAP2. Activated by NGF via NTRK1. Activated by PRKAA2 through its C-terminal regulatory domain. GTP-binding protein involved in protein trafficking that regulates endocytic recycling and cytoskeleton remodeling. GTP-bound form plays an important role in the transport of multiple palmitoylated proteins form the Golgi to the plasma membrane. Required for normal completion of mitotic cytokinesis. Plays a role in the reorganization of the actin cytoskeleton and the formation of stress fibers. Involved in the regulation of dendritic spine development, contributing to the regulation of dendritic branching and filopodia extension. Potentiates the neurite outgrowth in primary neurons by interacting with the molecular adapter APBB1. Plays an important role in membrane trafficking, during junctional remodeling and epithelial polarization. Regulates surface levels of adherens junction proteins such as CDH1. Required for NTRK1 sorting to the recycling pathway from early endosomes. Functionally, (Microbial infection) Functions as an allosteric activator of the cholera toxin catalytic subunit, an ADP-ribosyltransferase. In terms of biological role, (Microbial infection) Plays a key role in the endocytosis of enterovirus 71 and thus viral entry into brain microvascular endothelial cells. This chain is ADP-ribosylation factor 6, found in Homo sapiens (Human).